Consider the following 522-residue polypeptide: Maturase K (522 aa).

This sequence belongs to the intron maturase 2 family. MatK subfamily.

The protein localises to the plastid. Its subcellular location is the chloroplast. Usually encoded in the trnK tRNA gene intron. Probably assists in splicing its own and other chloroplast group II introns. This chain is Maturase K, found in Gladiolus papilio (Goldblotch gladiolus).